A 464-amino-acid chain; its full sequence is Cytoplasmic tRNA 2-thiolation protein 2 (464 aa).

It belongs to the CTU2/NCS2 family.

It localises to the cytoplasm. Its pathway is tRNA modification; 5-methoxycarbonylmethyl-2-thiouridine-tRNA biosynthesis. Functionally, plays a central role in 2-thiolation of mcm(5)S(2)U at tRNA wobble positions of tRNA(Lys), tRNA(Glu) and tRNA(Gln). May act by forming a heterodimer with NCS6/CTU1 that ligates sulfur from thiocarboxylated URM1 onto the uridine of tRNAs at wobble position. This chain is Cytoplasmic tRNA 2-thiolation protein 2, found in Oryza sativa subsp. indica (Rice).